Consider the following 1136-residue polypeptide: Pesticidal crystal protein Cry4B protoxin (1136 aa).

The segment at 84–282 (TPERVWNDFM…PADKIDNTKL (199 aa)) is domain I. Residues 283-466 (SKTEFTREIY…SNRVSFAWTH (184 aa)) form a domain II region. Residues 467-641 (KIVDPNNQIY…PITQSVLDET (175 aa)) are domain III.

This sequence belongs to the delta endotoxin family. In terms of assembly, in the presence of micelles active toxin forms oligomers that can be fit into cryo-EM maps as trimers. Binds to host (A.gambiae) cadherin AgCad1 (also called BT-R3), probably on the cell surface. Activated toxin may bind its host AgCad1 receptor as a monomer, but also forms an oligomer that is not active. Mg(2+) serves as cofactor. In terms of processing, treatment of recombinant protein with A.aegypti 3rd instar larvae midgut extract for 1 hour yields major bands of 72 and 45 kDa, the combined proteins are toxic to mosquitoes. Longer digestion, which removes the 72 kDa protein, yields a non-toxic preparation. Proteolysis by yields a 65 kDa toxic protein and 48 and 17 kDa fragments which are not toxic. As to expression, host (A.gambiae) larval midgut; binds to host brush border membranes, probably to cadherin-AgCad1 (Cad1, also called BT-R3).

The protein localises to the spore. With respect to regulation, toxic activity on Trichoplusia ni insect cells stably transfected with the AgCad1/BT-R3 receptor leads to oncosis, cell death characterized by cell swelling, membrane blebbing and depletion of energy reserves. Cell death is blocked by EDTA (but not EGTA) and is partially prevented by pretreatment with NF449 (inhibits G-s-alpha-60A and adenylyl cyclase, AC) and 2',5'-dideoxyadenosine 3'-diphosphate (ddADP, inhibits AC), while H-89 and PKAI 14-22 (both inhibit protein kinase A), ouabain (inhibits Na+/K+-ATPase) and a cell exocytosis inhibitor (Exo1) nearly completely prevent the action of the toxin in this system. The cAMP analog pCPT-cAMP and the AC activator FSK enhance toxicity. Functionally, a pesticidal protein active against Aedes and Anopheles mosquito species; activity on Culex species is strain dependent. It remains toxic to permethrin-resistant strains of A.gambiae. Following activation of the protoxin by mosquito larvae midgut extract (or by chymotrypsin or trypsin treatment) it becomes insecticidal. Causes mosquito cell death by activating a host G-protein-coupled receptor which subsequently activates adenylyl cyclase and increases cAMP production. cAMP activates protein kinase A which sets off a series of downstream events which includes increased exocytosis (probably bringing more receptor to the cell membrane), Na+/K+-ATPase activation and eventual host cell death. Another group suggests that alkaline phosphatase serves as the insect receptor and that the protein forms pores in insect cell membranes. In Bacillus thuringiensis subsp. israelensis, this protein is Pesticidal crystal protein Cry4B protoxin.